Reading from the N-terminus, the 100-residue chain is MKITQEEVTHVANLSKLRFSEEETAAFATTLSKIVDMVELLGEVDTTGVAPTTTMADRKTVLRPDVAEEGIDRDRLFKNVPEKDNYYIKVPAILDNGGDA.

This sequence belongs to the GatC family. In terms of assembly, heterotrimer of A, B and C subunits.

It catalyses the reaction L-glutamyl-tRNA(Gln) + L-glutamine + ATP + H2O = L-glutaminyl-tRNA(Gln) + L-glutamate + ADP + phosphate + H(+). It carries out the reaction L-aspartyl-tRNA(Asn) + L-glutamine + ATP + H2O = L-asparaginyl-tRNA(Asn) + L-glutamate + ADP + phosphate + 2 H(+). In terms of biological role, allows the formation of correctly charged Asn-tRNA(Asn) or Gln-tRNA(Gln) through the transamidation of misacylated Asp-tRNA(Asn) or Glu-tRNA(Gln) in organisms which lack either or both of asparaginyl-tRNA or glutaminyl-tRNA synthetases. The reaction takes place in the presence of glutamine and ATP through an activated phospho-Asp-tRNA(Asn) or phospho-Glu-tRNA(Gln). This Streptococcus pneumoniae (strain Taiwan19F-14) protein is Aspartyl/glutamyl-tRNA(Asn/Gln) amidotransferase subunit C.